A 563-amino-acid chain; its full sequence is Cystathionine gamma-synthase 1, chloroplastic (563 aa).

Residues 1 to 68 constitute a chloroplast transit peptide; sequence MAVSSFQCPT…SRILRFPPNF (68 aa). Residues Tyr-226, Arg-228, Gly-256, Met-257, Tyr-281, Ser-376, and Thr-378 each coordinate pyridoxal 5'-phosphate. Lys-379 carries the N6-(pyridoxal phosphate)lysine modification.

It belongs to the trans-sulfuration enzymes family. It depends on pyridoxal 5'-phosphate as a cofactor.

Its subcellular location is the plastid. The protein resides in the chloroplast. It catalyses the reaction O-phospho-L-homoserine + L-cysteine = L,L-cystathionine + phosphate. The catalysed reaction is O-succinyl-L-homoserine + L-cysteine = L,L-cystathionine + succinate + H(+). It functions in the pathway amino-acid biosynthesis; L-methionine biosynthesis via de novo pathway; L-cystathionine from O-succinyl-L-homoserine: step 1/1. Inhibited by propargylglycine. Catalyzes the first committed step of methionine (Met) biosynthesis. Catalyzes the formation of L-cystathionine from homoserine esters and L-cysteine, via a gamma-replacement reaction. Substrate preference for cystathionine synthesis is O-phospho-L-homoserine (OPH) &gt; O(4)-succinyl-L-homoserine (OSH) &gt;&gt; O-acetyl-L-homoserine (OAH). Is able, at extremely low rate, to catalyze a gamma-elimination of OPH in the absence of cysteine to produce inorganic phosphate (Pi), 2-oxobutanoate and ammonia. This Arabidopsis thaliana (Mouse-ear cress) protein is Cystathionine gamma-synthase 1, chloroplastic.